The primary structure comprises 342 residues: Cytosolic Fe-S cluster assembly factor NBP35 (342 aa).

Residues 16–42 are disordered; sequence SKAAPKLVAPEPEHCPGPESEQAGKGD. The [4Fe-4S] cluster site is built by C30, C44, C47, and C53. ATP is bound at residue 83–90; the sequence is GKGGVGKS. [4Fe-4S] cluster is bound by residues C256 and C259.

Belongs to the Mrp/NBP35 ATP-binding proteins family. NUBP1/NBP35 subfamily. In terms of assembly, heterotetramer of 2 NBP35 and 2 CFD1 chains. [4Fe-4S] cluster is required as a cofactor.

The protein resides in the cytoplasm. Functionally, component of the cytosolic iron-sulfur (Fe/S) protein assembly (CIA) machinery. Required for maturation of extramitochondrial Fe-S proteins. The NBP35-CFD1 heterotetramer forms a Fe-S scaffold complex, mediating the de novo assembly of an Fe-S cluster and its transfer to target apoproteins. The chain is Cytosolic Fe-S cluster assembly factor NBP35 from Coccidioides immitis (strain RS) (Valley fever fungus).